The sequence spans 260 residues: NH(3)-dependent NAD(+) synthetase (260 aa).

31 to 38 is an ATP binding site; sequence GLSGGLDS. Asp37 contributes to the Mg(2+) binding site. Arg112 is a binding site for deamido-NAD(+). An ATP-binding site is contributed by Thr132. Glu137 is a binding site for Mg(2+). ATP is bound by residues Lys161 and Ser183.

It belongs to the NAD synthetase family. In terms of assembly, homodimer.

It catalyses the reaction deamido-NAD(+) + NH4(+) + ATP = AMP + diphosphate + NAD(+) + H(+). It participates in cofactor biosynthesis; NAD(+) biosynthesis; NAD(+) from deamido-NAD(+) (ammonia route): step 1/1. Functionally, catalyzes the ATP-dependent amidation of deamido-NAD to form NAD. Uses ammonia as a nitrogen source. This is NH(3)-dependent NAD(+) synthetase from Helicobacter pylori (strain J99 / ATCC 700824) (Campylobacter pylori J99).